Here is a 96-residue protein sequence, read N- to C-terminus: Integration host factor subunit beta (96 aa).

The protein belongs to the bacterial histone-like protein family. In terms of assembly, heterodimer of an alpha and a beta chain.

Its function is as follows. This protein is one of the two subunits of integration host factor, a specific DNA-binding protein that functions in genetic recombination as well as in transcriptional and translational control. This chain is Integration host factor subunit beta, found in Caulobacter vibrioides (strain ATCC 19089 / CIP 103742 / CB 15) (Caulobacter crescentus).